Here is a 633-residue protein sequence, read N- to C-terminus: Bifunctional enzyme CysN/CysC (633 aa).

The tract at residues 1–463 (MSHQSDLISE…REERAGRFGQ (463 aa)) is sulfate adenylyltransferase. Residues 22–241 (KELLRFLTCG…TVEIAADRNL (220 aa)) enclose the tr-type G domain. The G1 stretch occupies residues 31-38 (GNVDDGKS). 31-38 (GNVDDGKS) is a binding site for GTP. The G2 stretch occupies residues 89 to 93 (GITID). Positions 110–113 (DTPG) are G3. GTP is bound by residues 110-114 (DTPGH) and 165-168 (NKMD). The G4 stretch occupies residues 165-168 (NKMD). Residues 204 to 206 (SAL) are G5. The tract at residues 464–633 (QPATVLFSGL…LDLLRERQAI (170 aa)) is adenylyl-sulfate kinase. 472 to 479 (GLSGAGKS) serves as a coordination point for ATP.

This sequence in the C-terminal section; belongs to the APS kinase family. It in the N-terminal section; belongs to the TRAFAC class translation factor GTPase superfamily. Classic translation factor GTPase family. CysN/NodQ subfamily. In terms of assembly, heterodimer composed of CysD, the smaller subunit, and CysNC.

The catalysed reaction is sulfate + ATP + H(+) = adenosine 5'-phosphosulfate + diphosphate. The enzyme catalyses adenosine 5'-phosphosulfate + ATP = 3'-phosphoadenylyl sulfate + ADP + H(+). The protein operates within sulfur metabolism; hydrogen sulfide biosynthesis; sulfite from sulfate: step 1/3. Its pathway is sulfur metabolism; hydrogen sulfide biosynthesis; sulfite from sulfate: step 2/3. Its function is as follows. With CysD forms the ATP sulfurylase (ATPS) that catalyzes the adenylation of sulfate producing adenosine 5'-phosphosulfate (APS) and diphosphate, the first enzymatic step in sulfur assimilation pathway. APS synthesis involves the formation of a high-energy phosphoric-sulfuric acid anhydride bond driven by GTP hydrolysis by CysN coupled to ATP hydrolysis by CysD. Functionally, APS kinase catalyzes the synthesis of activated sulfate. The chain is Bifunctional enzyme CysN/CysC (cysNC) from Pseudomonas aeruginosa (strain ATCC 15692 / DSM 22644 / CIP 104116 / JCM 14847 / LMG 12228 / 1C / PRS 101 / PAO1).